The following is a 253-amino-acid chain: Pupal cuticle protein (253 aa).

A signal peptide spans 1–18; sequence MKSMIVVACLALACGAHA. Residues 54-66 show a composition bias toward polar residues; the sequence is LQQASKNNPNPND. The interval 54 to 74 is disordered; that stretch reads LQQASKNNPNPNDDGSYDPRW. Tandem repeats lie at residues 97 to 100, 115 to 118, and 154 to 157. Residues 155–167 are compositionally biased toward low complexity; the sequence is APAQQQWNAPAHQ. Disordered regions lie at residues 155 to 178 and 187 to 206; these read APAQQQWNAPAHQDWNAPAHQDWN and APAHQSWNGAPSWQSGAPAH. Residues 189 to 201 are compositionally biased toward polar residues; the sequence is AHQSWNGAPSWQS.

Component of the cuticle of the pupae of silk moth. In Bombyx mori (Silk moth), this protein is Pupal cuticle protein (PCP).